The sequence spans 700 residues: Beta-galactosidase Bga (700 aa).

Arg103 contacts substrate. Cys107 is a binding site for Zn(2+). Residue Asn141 participates in substrate binding. The Proton donor role is filled by Glu142. 3 residues coordinate Zn(2+): Cys151, Cys153, and Cys156. Catalysis depends on Glu312, which acts as the Nucleophile. Substrate is bound by residues Trp320 and 360-363; that span reads EQYH. Positions 648-658 are enriched in acidic residues; the sequence is DPESLAVDDTD. The interval 648–674 is disordered; sequence DPESLAVDDTDRDGFDPMADDDKDSSA.

Belongs to the glycosyl hydrolase 42 family.

The enzyme catalyses Hydrolysis of terminal non-reducing beta-D-galactose residues in beta-D-galactosides.. Requires 4 M NaCl or KCl for maximal activity. In terms of biological role, cleaves o-nitrophenyl-beta-D-galactopyranoside (ONPG) in vitro. The polypeptide is Beta-galactosidase Bga (Halorubrum lacusprofundi (strain ATCC 49239 / DSM 5036 / JCM 8891 / ACAM 34)).